The sequence spans 156 residues: Ribosomal RNA large subunit methyltransferase H (156 aa).

S-adenosyl-L-methionine is bound by residues L73, G104, and 123–128; that span reads IGPLTL.

It belongs to the RNA methyltransferase RlmH family. In terms of assembly, homodimer.

It is found in the cytoplasm. It carries out the reaction pseudouridine(1915) in 23S rRNA + S-adenosyl-L-methionine = N(3)-methylpseudouridine(1915) in 23S rRNA + S-adenosyl-L-homocysteine + H(+). Functionally, specifically methylates the pseudouridine at position 1915 (m3Psi1915) in 23S rRNA. The protein is Ribosomal RNA large subunit methyltransferase H of Stenotrophomonas maltophilia (strain R551-3).